Reading from the N-terminus, the 475-residue chain is Aspartyl/glutamyl-tRNA(Asn/Gln) amidotransferase subunit B (475 aa).

The protein belongs to the GatB/GatE family. GatB subfamily. Heterotrimer of A, B and C subunits.

The enzyme catalyses L-glutamyl-tRNA(Gln) + L-glutamine + ATP + H2O = L-glutaminyl-tRNA(Gln) + L-glutamate + ADP + phosphate + H(+). It carries out the reaction L-aspartyl-tRNA(Asn) + L-glutamine + ATP + H2O = L-asparaginyl-tRNA(Asn) + L-glutamate + ADP + phosphate + 2 H(+). In terms of biological role, allows the formation of correctly charged Asn-tRNA(Asn) or Gln-tRNA(Gln) through the transamidation of misacylated Asp-tRNA(Asn) or Glu-tRNA(Gln) in organisms which lack either or both of asparaginyl-tRNA or glutaminyl-tRNA synthetases. The reaction takes place in the presence of glutamine and ATP through an activated phospho-Asp-tRNA(Asn) or phospho-Glu-tRNA(Gln). The protein is Aspartyl/glutamyl-tRNA(Asn/Gln) amidotransferase subunit B of Bacillus thuringiensis subsp. konkukian (strain 97-27).